The primary structure comprises 130 residues: Chorion class B protein PC10 (130 aa).

Residues 1 to 22 (GAWNGRLGCGCGGIAPAAELAA) form a left arm region. Residues 23–93 (SYGGGLGVAS…GNGALGITAE (71 aa)) form a central domain region. Residues 94–130 (RGYGAGIGYEGLGLGYGAGIGYKGYGLGGCGCGCGRL) are right arm (Gly-rich tandem repeats).

The protein belongs to the chorion protein family.

Its function is as follows. This protein is one of many from the eggshell of the silk moth. This chain is Chorion class B protein PC10, found in Antheraea polyphemus (Polyphemus moth).